The chain runs to 567 residues: Polyadenylate-binding protein-interacting protein 7 (567 aa).

The tract at residues Met-1–Leu-22 is disordered. Positions Ser-13–Leu-22 are enriched in polar residues. Residues Thr-21–Pro-31 carry the PAM2-like motif. The 45-residue stretch at Asp-215 to Leu-259 folds into the CUE domain. The tract at residues Arg-355–Ser-387 is disordered. A compositionally biased stretch (polar residues) spans Ala-359–Ala-371. One can recognise a Smr domain in the interval Ile-485 to Tyr-567.

Interacts with MPC and PAB2. Expressed in cauline leaves, stems, rosette leaves, immature siliques and primary inflorescences.

This is Polyadenylate-binding protein-interacting protein 7 (CID7) from Arabidopsis thaliana (Mouse-ear cress).